Reading from the N-terminus, the 200-residue chain is Large ribosomal subunit protein uL4 (200 aa).

The interval 44 to 70 is disordered; that stretch reads AQKTRAEVTGSGKKPWRQKGTGRARSG.

Belongs to the universal ribosomal protein uL4 family. In terms of assembly, part of the 50S ribosomal subunit.

Functionally, one of the primary rRNA binding proteins, this protein initially binds near the 5'-end of the 23S rRNA. It is important during the early stages of 50S assembly. It makes multiple contacts with different domains of the 23S rRNA in the assembled 50S subunit and ribosome. Its function is as follows. Protein L4 is a both a transcriptional repressor and a translational repressor protein. It regulates transcription of the S10 operon (to which L4 belongs) by causing premature termination of transcription within the S10 leader. L4 controls the translation of the S10 operon by binding to its mRNA. In terms of biological role, this protein when expressed in E.coli represses both transcription and translation of the endogenous S10 operon. As the M.morganii S10 leader can be regulated in vitro by the E.coli L4 protein this strongly suggests the endogenous protein controls its own S10 operon in a similar fashion. Forms part of the polypeptide exit tunnel. The sequence is that of Large ribosomal subunit protein uL4 (rplD) from Morganella morganii (Proteus morganii).